Here is a 153-residue protein sequence, read N- to C-terminus: UPF0127 protein TGAM_1372 (153 aa).

The protein belongs to the UPF0127 family.

The protein is UPF0127 protein TGAM_1372 of Thermococcus gammatolerans (strain DSM 15229 / JCM 11827 / EJ3).